The chain runs to 256 residues: Endonuclease NucS (256 aa).

Residues 62-97 (AAKSAQHSRESVAGGAVDGDSATHSPESVAAGEPEK) form a disordered region.

Belongs to the NucS endonuclease family.

The protein resides in the cytoplasm. Its function is as follows. Cleaves both 3' and 5' ssDNA extremities of branched DNA structures. In Bifidobacterium longum (strain NCC 2705), this protein is Endonuclease NucS.